Here is a 228-residue protein sequence, read N- to C-terminus: Protein GrpE (228 aa).

Basic and acidic residues predominate over residues Met1 to Ser22. The interval Met1–Leu71 is disordered. Polar residues predominate over residues Gln38–Asn53.

This sequence belongs to the GrpE family. Homodimer.

The protein localises to the cytoplasm. In terms of biological role, participates actively in the response to hyperosmotic and heat shock by preventing the aggregation of stress-denatured proteins, in association with DnaK and GrpE. It is the nucleotide exchange factor for DnaK and may function as a thermosensor. Unfolded proteins bind initially to DnaJ; upon interaction with the DnaJ-bound protein, DnaK hydrolyzes its bound ATP, resulting in the formation of a stable complex. GrpE releases ADP from DnaK; ATP binding to DnaK triggers the release of the substrate protein, thus completing the reaction cycle. Several rounds of ATP-dependent interactions between DnaJ, DnaK and GrpE are required for fully efficient folding. The sequence is that of Protein GrpE from Coprothermobacter proteolyticus (strain ATCC 35245 / DSM 5265 / OCM 4 / BT).